Reading from the N-terminus, the 129-residue chain is Small ribosomal subunit protein uS11 (129 aa).

This sequence belongs to the universal ribosomal protein uS11 family. As to quaternary structure, part of the 30S ribosomal subunit. Interacts with proteins S7 and S18. Binds to IF-3.

Functionally, located on the platform of the 30S subunit, it bridges several disparate RNA helices of the 16S rRNA. Forms part of the Shine-Dalgarno cleft in the 70S ribosome. The chain is Small ribosomal subunit protein uS11 from Bradyrhizobium sp. (strain BTAi1 / ATCC BAA-1182).